The following is a 177-amino-acid chain: ATP synthase subunit delta 1 (177 aa).

The protein belongs to the ATPase delta chain family. F-type ATPases have 2 components, F(1) - the catalytic core - and F(0) - the membrane proton channel. F(1) has five subunits: alpha(3), beta(3), gamma(1), delta(1), epsilon(1). F(0) has three main subunits: a(1), b(2) and c(10-14). The alpha and beta chains form an alternating ring which encloses part of the gamma chain. F(1) is attached to F(0) by a central stalk formed by the gamma and epsilon chains, while a peripheral stalk is formed by the delta and b chains.

It localises to the cell inner membrane. Its function is as follows. F(1)F(0) ATP synthase produces ATP from ADP in the presence of a proton or sodium gradient. F-type ATPases consist of two structural domains, F(1) containing the extramembraneous catalytic core and F(0) containing the membrane proton channel, linked together by a central stalk and a peripheral stalk. During catalysis, ATP synthesis in the catalytic domain of F(1) is coupled via a rotary mechanism of the central stalk subunits to proton translocation. Functionally, this protein is part of the stalk that links CF(0) to CF(1). It either transmits conformational changes from CF(0) to CF(1) or is implicated in proton conduction. The protein is ATP synthase subunit delta 1 of Vibrio campbellii (strain ATCC BAA-1116).